A 369-amino-acid polypeptide reads, in one-letter code: MKKLIAVAVLSACGSLAHANTNIPNYNTDAHLYEFTQTYDLVVPKGSQGQTNLWVPLPFNGEYQQVKSIHFEGNYMNAYVTENNKYGAKTLFATWNKDAQKRDLKVMMVIETKDREPMVKGALENYTPPKDIQYSVDVQEYLKATPHIKTDGIVKEFPDKILGKETNPLKKAELIHHWFVKNMERDNSVLGCGDGDVEKILTTGVLKGKCTDINSVFVALARAAGIPAREIFGIRLGAAEKMGKYSKGAFGSANEQGIANVSGGQHCRAEFYLAGFGWVPVDSADVAKMRLAEKKSVEDKDTQAVAKYLFGNWEANWVGFNHARDFDLYPQPELAPINNFGYPYAEVGGDPLNSFDPKEFKYDYVSKKL.

A signal peptide spans 1–19 (MKKLIAVAVLSACGSLAHA).

This is an uncharacterized protein from Haemophilus influenzae (strain ATCC 51907 / DSM 11121 / KW20 / Rd).